Here is a 520-residue protein sequence, read N- to C-terminus: CUGBP Elav-like family member 4 (520 aa).

RRM domains follow at residues 47-128 (IKLF…PADS), 135-215 (RKLF…FADT), and 435-513 (CNLF…LKRP).

The protein belongs to the CELF/BRUNOL family.

It localises to the nucleus. The protein resides in the cytoplasm. RNA-binding protein that may be implicated in the regulation of pre-mRNA alternative splicing. This is CUGBP Elav-like family member 4 (celf4) from Danio rerio (Zebrafish).